Reading from the N-terminus, the 668-residue chain is Potassium voltage-gated channel subfamily KQT member 1 (668 aa).

The Cytoplasmic portion of the chain corresponds to Met-1–Trp-119. Position 27 is a phosphoserine; by PKA (Ser-27). Residues Lys-120–Leu-141 form a helical membrane-spanning segment. The Extracellular portion of the chain corresponds to Ser-142–Thr-152. A helical transmembrane segment spans residues Gly-153–Trp-175. Residues Ser-176–Arg-191 lie on the Cytoplasmic side of the membrane. A helical membrane pass occupies residues Phe-192–Lys-217. At Gly-218 to Ala-225 the chain is on the extracellular side. Residues Ile-226 to Asp-241 form a helical; Voltage-sensor membrane-spanning segment. The tract at residues Met-237 to Gly-245 is interaction with KCNE3. Residues Arg-242–Gln-259 lie on the Cytoplasmic side of the membrane. Gln-243 contacts a 1,2-diacyl-sn-glycero-3-phospho-(1D-myo-inositol-4,5-bisphosphate). Residues Glu-260 to Ala-282 form a helical membrane-spanning segment. The Extracellular portion of the chain corresponds to Glu-283 to Tyr-298. Asn-288 carries N-linked (GlcNAc...) asparagine glycosylation. An intramembrane region (pore-forming) is located at residues Ala-299–Pro-319. At Gln-320–Thr-321 the chain is on the extracellular side. Residues Trp-322–Gly-347 traverse the membrane as a helical segment. Residues Ser-348–Ser-668 are Cytoplasmic-facing. The tract at residues Ala-369–Tyr-381 is interaction with CALM. Ser-406 and Ser-408 each carry phosphoserine. The segment at Lys-514–Phe-528 is interaction with CALM; calcium-dependent. An interaction with KCNE1 C-terminus region spans residues Pro-534–Leu-571. A coiled-coil region spans residues Ser-584–Gln-620. An interaction with AKAP9 region spans residues Ile-587 to Leu-615. Residues Gly-588–Gln-619 form a C-terminal assembly domain (tetramerization) region.

This sequence belongs to the potassium channel family. KQT (TC 1.A.1.15) subfamily. Kv7.1/KCNQ1 sub-subfamily. As to quaternary structure, tetramer. Heterotetramer with KCNE1; form the native cardiac channel I(Ks) which increases the amplitude and slows down the activation kinetics of outward potassium current and targets to the membrane raft. Interacts (via C-terminus) with CALM; forms a heterooctameric structure (with 4:4 KCNQ1:CALM stoichiometry) in a calcium-independent manner. Interacts with AKAP9; targets protein kinase A (PKA) catalytic and regulatory subunits and protein phosphatase 1 (PP1) to the KCNQ1-KCNE1 complex, allowing PKA-mediated phosphorylation and increase of delayed rectifier potassium channel activity. Interacts with KCNE2; form an heterooligomer complex that targets to the membrane raft and leading to currents with an apparently instantaneous activation, a rapid deactivation process and a linear current-voltage relationship and decreases the amplitude of the outward current. Interacts with AP2M1; mediates estrogen-induced internalization via clathrin-coated vesicles. Interacts with NEDD4L; promotes internalization and decreases I(Ks) currents. Interacts with USP2; counteracts the NEDD4L-specific down-regulation of I(Ks) and restore plasma membrane localization. Heterotetramer with KCNQ5; has a voltage-gated potassium channel activity. Interacts with KCNE3; four KCNE3 molecules are bound to one KCNQ1 tetramer (4:4 KCNQ1:KCNE3 stoichiometry); alters membrane raft localization; affects KCNQ1 structure and gating properties. Interacts with KCNE4; impairs KCNQ1 localization in lipid rafts and inhibits voltage-gated potassium channel activity. Interacts with KCNE5; impairs KCNQ1 localization in lipid rafts and only conducts current upon strong and continued depolarization. Interacts with SLC5A3; forms coregulatory channel-transporter complexes that modulate Na(+)-coupled myo-inositol influx through the transporter. Phosphorylation at Ser-27 by PKA; increases delayed rectifier potassium channel activity of the KCNQ1-KCNE1 complex through a macromolecular complex that includes PKA, PP1, and the targeting protein AKAP9. Post-translationally, ubiquitinated by NEDD4L; promotes internalization. The ubiquitinylated form is internalized through a clathrin-mediated endocytosis by interacting with AP2M1 and is recycled back to the cell membrane via RAB4A and RAB11A. In terms of processing, deubiquitinated by USP2; counteracts the NEDD4L-specific down-regulation of I(Ks) and restores the membrane localization. As to expression, expressed in heart, kidney and salivary glands. Detected in the cochlea. Almost undetectable in brain, skeletal muscle and liver. Widely expressed in embryonic and neonatal tissues. Expressed in choroid plexus epithelium (at protein level).

Its subcellular location is the cell membrane. The protein resides in the cytoplasmic vesicle membrane. The protein localises to the early endosome. It localises to the membrane raft. It is found in the endoplasmic reticulum. Its subcellular location is the basolateral cell membrane. The protein resides in the apical cell membrane. It carries out the reaction K(+)(in) = K(+)(out). With respect to regulation, PIP2 molecule is essential to activate KCNQ channels by inducing the coupling of the voltage-sensing domain (VSD) and the pore-forming domain (PD). Upon channel activation, PIP2 disrupts the VSD-calmodulin/CALM interactions, causing the release of CALM from the VSD which triggers the opening of the gate. Calcium potentiates KCNQ1 channel current through calcium-bound CALM. Calcium-bound CALM competes with PIP2 to stabilize the channel open state. Its function is as follows. Pore-forming subunit of the voltage-gated potassium (Kv) channel involved in the regulation of cardiomyocyte excitability and important in normal development and functions of myocardium, inner ear, stomach and colon. Associates with KCNE beta subunits that modulates current kinetics. Induces a voltage-dependent by rapidly activating and slowly deactivating potassium-selective outward current. Also promotes a delayed voltage activated potassium current showing outward rectification characteristic. During beta-adrenergic receptor stimulation participates in cardiac increases the amplitude and slows down the activation kinetics of outward potassium current I(Ks). Muscarinic agonist oxotremorine-M strongly suppresses KCNQ1/KCNE1 current. When associated with KCNE3, forms the potassium channel that is important for cyclic AMP-stimulated intestinal secretion of chloride ions. This interaction with KCNE3 is reduced by 17beta-estradiol, resulting in the reduction of currents. During conditions of increased substrate load, maintains the driving force for proximal tubular and intestinal sodium ions absorption, gastric acid secretion, and cAMP-induced jejunal chloride ions secretion. Allows the provision of potassium ions to the luminal membrane of the secretory canaliculus in the resting state as well as during stimulated acid secretion. When associated with KCNE2, forms a heterooligomer complex leading to currents with an apparently instantaneous activation, a rapid deactivation process and a linear current-voltage relationship and decreases the amplitude of the outward current. When associated with KCNE4, inhibits voltage-gated potassium channel activity. When associated with KCNE5, this complex only conducts current upon strong and continued depolarization. Also forms a heterotetramer with KCNQ5; has a voltage-gated potassium channel activity. Binds with phosphatidylinositol 4,5-bisphosphate. KCNQ1-KCNE2 channel associates with Na(+)-coupled myo-inositol symporter in the apical membrane of choroid plexus epithelium and regulates the myo-inositol gradient between blood and cerebrospinal fluid with an impact on neuron excitability. This Mus musculus (Mouse) protein is Potassium voltage-gated channel subfamily KQT member 1.